The primary structure comprises 221 residues: Cytidylate kinase (221 aa).

Glycine 11 to threonine 19 contributes to the ATP binding site.

Belongs to the cytidylate kinase family. Type 1 subfamily.

Its subcellular location is the cytoplasm. The enzyme catalyses CMP + ATP = CDP + ADP. It carries out the reaction dCMP + ATP = dCDP + ADP. The protein is Cytidylate kinase of Cupriavidus pinatubonensis (strain JMP 134 / LMG 1197) (Cupriavidus necator (strain JMP 134)).